A 107-amino-acid chain; its full sequence is Putative double-stranded DNA mimic protein HSM_1473 (107 aa).

This sequence belongs to the putative dsDNA mimic protein family.

Functionally, may act as a double-stranded DNA (dsDNA) mimic. Probably regulates the activity of a dsDNA-binding protein. The chain is Putative double-stranded DNA mimic protein HSM_1473 from Histophilus somni (strain 2336) (Haemophilus somnus).